The chain runs to 286 residues: Polyamine aminopropyltransferase (286 aa).

The region spanning 5–242 (DNWFTEVLEE…GWWSATLASK (238 aa)) is the PABS domain. Residue glutamine 35 participates in S-methyl-5'-thioadenosine binding. Spermidine-binding residues include histidine 66 and aspartate 90. Residues aspartate 110 and 141–142 (DG) contribute to the S-methyl-5'-thioadenosine site. The Proton acceptor role is filled by aspartate 160. Spermidine is bound at residue 160-163 (DSTD).

This sequence belongs to the spermidine/spermine synthase family. Homodimer or homotetramer.

Its subcellular location is the cytoplasm. It carries out the reaction S-adenosyl 3-(methylsulfanyl)propylamine + putrescine = S-methyl-5'-thioadenosine + spermidine + H(+). It functions in the pathway amine and polyamine biosynthesis; spermidine biosynthesis; spermidine from putrescine: step 1/1. Its function is as follows. Catalyzes the irreversible transfer of a propylamine group from the amino donor S-adenosylmethioninamine (decarboxy-AdoMet) to putrescine (1,4-diaminobutane) to yield spermidine. The protein is Polyamine aminopropyltransferase of Alkalilimnicola ehrlichii (strain ATCC BAA-1101 / DSM 17681 / MLHE-1).